The primary structure comprises 339 residues: Methyltransferase ptaI (339 aa).

Belongs to the methyltransferase superfamily.

The protein operates within secondary metabolite biosynthesis. Functionally, methyltransferase; part of the gene cluster that mediates the biosynthesis of pestheic acid, a diphenyl ether which is a biosynthetic precursor of the unique chloropupukeananes. The biosynthesis initiates from condensation of acetate and malonate units catalyzed by the non-reducing PKS ptaA. As the ptaA protein is TE/CLC domain-deficient, hydrolysis and Claisen cyclization of the polyketide could be catalyzed by ptaB containing a beta-lactamase domain. The ptaB protein might hydrolyze the thioester bond between the ACP of ptaA and the intermediate to release atrochrysone carboxylic acid, which is spontaneously dehydrated to form endocrocin anthrone. Endocrocin anthrone is then converted to endocrocin, catalyzed by the anthrone oxygenase ptaC. Spontaneous decarboxylation of endocrocin occurs to generate emodin. An O-methyltransferase (ptaH or ptaI) could methylate emodin to form physcion. PtaJ could then catalyze the oxidative cleavage of physcion, and rotation of the intermediate could then afford desmethylisosulochrin. PtaF, a putative NADH-dependent oxidoreductase, might also participate in the oxidative cleavage step. Desmethylisosulochrin is then transformed by another O-methyltransferase (ptaH or ptaI) to form isosulochrin. Chlorination of isosulochrin by ptaM in the cyclohexadienone B ring then produces chloroisosulochrin. PtaE is responsible for the oxidative coupling reactions of both benzophenones isosulouchrin and chloroisosulochrin to RES-1214-1 and pestheic acid respectively, regardless of chlorination. The sequence is that of Methyltransferase ptaI from Pestalotiopsis fici (strain W106-1 / CGMCC3.15140).